The following is a 542-amino-acid chain: POTE ankyrin domain family member C (542 aa).

ANK repeat units lie at residues Glu138–Lys171, Gln172–Val201, Lys205–Ile234, Tyr238–Ser267, Cys271–Ala300, Tyr304–Ser333, and Ser337–Ser373. The interval Ser369 to Leu494 is disordered. Composition is skewed to basic and acidic residues over residues Gln377–Val392, Met401–Asp412, and Glu466–Ser481. Residues Glu482–Leu494 show a composition bias toward polar residues. A coiled-coil region spans residues Ser489–Ser538.

The protein belongs to the POTE family. Expressed in prostate and testis.

The protein is POTE ankyrin domain family member C (POTEC) of Homo sapiens (Human).